The chain runs to 189 residues: Peptidyl-tRNA hydrolase (189 aa).

Residue Y18 participates in tRNA binding. H23 (proton acceptor) is an active-site residue. TRNA is bound by residues F67, N69, and N115.

Belongs to the PTH family. In terms of assembly, monomer.

The protein resides in the cytoplasm. It carries out the reaction an N-acyl-L-alpha-aminoacyl-tRNA + H2O = an N-acyl-L-amino acid + a tRNA + H(+). Functionally, hydrolyzes ribosome-free peptidyl-tRNAs (with 1 or more amino acids incorporated), which drop off the ribosome during protein synthesis, or as a result of ribosome stalling. Its function is as follows. Catalyzes the release of premature peptidyl moieties from peptidyl-tRNA molecules trapped in stalled 50S ribosomal subunits, and thus maintains levels of free tRNAs and 50S ribosomes. The polypeptide is Peptidyl-tRNA hydrolase (Leptospira borgpetersenii serovar Hardjo-bovis (strain JB197)).